The primary structure comprises 271 residues: Phosphate import ATP-binding protein PstB (271 aa).

The region spanning 25–266 (VDVRQLSLWY…PKHPYTEAYI (242 aa)) is the ABC transporter domain. Residue 57 to 64 (GPSGCGKS) participates in ATP binding.

It belongs to the ABC transporter superfamily. Phosphate importer (TC 3.A.1.7) family. As to quaternary structure, the complex is composed of two ATP-binding proteins (PstB), two transmembrane proteins (PstC and PstA) and a solute-binding protein (PstS).

Its subcellular location is the cell inner membrane. The enzyme catalyses phosphate(out) + ATP + H2O = ADP + 2 phosphate(in) + H(+). Part of the ABC transporter complex PstSACB involved in phosphate import. Responsible for energy coupling to the transport system. The sequence is that of Phosphate import ATP-binding protein PstB from Thermus thermophilus (strain ATCC BAA-163 / DSM 7039 / HB27).